Reading from the N-terminus, the 334-residue chain is GTPase Obg (334 aa).

Residues 1–159 (MRFVDEVVIK…KEVRLELNLL (159 aa)) form the Obg domain. The OBG-type G domain maps to 160-331 (ADIALLGLPN…LAKKLNEFLH (172 aa)). GTP-binding positions include 166–173 (GLPNAGKS), 191–195 (FTTMY), 212–215 (DIPG), 282–285 (NKID), and 312–314 (SAA). Positions 173 and 193 each coordinate Mg(2+).

This sequence belongs to the TRAFAC class OBG-HflX-like GTPase superfamily. OBG GTPase family. As to quaternary structure, monomer. It depends on Mg(2+) as a cofactor.

The protein resides in the cytoplasm. In terms of biological role, an essential GTPase which binds GTP, GDP and possibly (p)ppGpp with moderate affinity, with high nucleotide exchange rates and a fairly low GTP hydrolysis rate. Plays a role in control of the cell cycle, stress response, ribosome biogenesis and in those bacteria that undergo differentiation, in morphogenesis control. This chain is GTPase Obg, found in Francisella philomiragia subsp. philomiragia (strain ATCC 25017 / CCUG 19701 / FSC 153 / O#319-036).